The chain runs to 370 residues: Aminomethyltransferase (370 aa).

This sequence belongs to the GcvT family. In terms of assembly, the glycine cleavage system is composed of four proteins: P, T, L and H.

It carries out the reaction N(6)-[(R)-S(8)-aminomethyldihydrolipoyl]-L-lysyl-[protein] + (6S)-5,6,7,8-tetrahydrofolate = N(6)-[(R)-dihydrolipoyl]-L-lysyl-[protein] + (6R)-5,10-methylene-5,6,7,8-tetrahydrofolate + NH4(+). In terms of biological role, the glycine cleavage system catalyzes the degradation of glycine. The sequence is that of Aminomethyltransferase from Prochlorococcus marinus (strain MIT 9215).